We begin with the raw amino-acid sequence, 318 residues long: D-alanine--D-alanine ligase (318 aa).

The ATP-grasp domain maps to Lys117–Glu315. An ATP-binding site is contributed by Ala146–Thr201. Mg(2+) is bound by residues Asp268, Glu282, and Asn284.

This sequence belongs to the D-alanine--D-alanine ligase family. Mg(2+) serves as cofactor. Requires Mn(2+) as cofactor.

It localises to the cytoplasm. The enzyme catalyses 2 D-alanine + ATP = D-alanyl-D-alanine + ADP + phosphate + H(+). It functions in the pathway cell wall biogenesis; peptidoglycan biosynthesis. Functionally, cell wall formation. This is D-alanine--D-alanine ligase from Xanthomonas axonopodis pv. citri (strain 306).